Consider the following 334-residue polypeptide: N-acetyl-gamma-glutamyl-phosphate reductase (334 aa).

Cys154 is a catalytic residue.

It belongs to the NAGSA dehydrogenase family. Type 1 subfamily.

The protein resides in the cytoplasm. The catalysed reaction is N-acetyl-L-glutamate 5-semialdehyde + phosphate + NADP(+) = N-acetyl-L-glutamyl 5-phosphate + NADPH + H(+). It functions in the pathway amino-acid biosynthesis; L-arginine biosynthesis; N(2)-acetyl-L-ornithine from L-glutamate: step 3/4. Functionally, catalyzes the NADPH-dependent reduction of N-acetyl-5-glutamyl phosphate to yield N-acetyl-L-glutamate 5-semialdehyde. The polypeptide is N-acetyl-gamma-glutamyl-phosphate reductase (Yersinia pseudotuberculosis serotype I (strain IP32953)).